A 66-amino-acid chain; its full sequence is Conotoxin Cal5.2 (66 aa).

The N-terminal stretch at 1–20 (MMYCLPVVCILLLLIPSSAT) is a signal peptide. A propeptide spanning residues 21–51 (FVVESRLEKDQAQSFTGDAWKRVSPIHEMIQ) is cleaved from the precursor. Residue Val-65 is modified to Valine amide.

This sequence belongs to the conotoxin T superfamily. In terms of processing, contains 2 disulfide bonds that can be either 'C1-C3, C2-C4' or 'C1-C4, C2-C3', since these disulfide connectivities have been observed for conotoxins with cysteine framework V (for examples, see AC P0DQQ7 and AC P81755). In terms of tissue distribution, expressed by the venom duct.

It is found in the secreted. Probable neurotoxin with unknown target. Possibly targets ion channels. In Californiconus californicus (California cone), this protein is Conotoxin Cal5.2.